The chain runs to 302 residues: Acetyl-coenzyme A carboxylase carboxyl transferase subunit beta (302 aa).

Residues 25–294 (VWTKCDSCGQ…PQEDIVTEAA (270 aa)) form the CoA carboxyltransferase N-terminal domain. Zn(2+) contacts are provided by Cys-29, Cys-32, Cys-48, and Cys-51. The C4-type zinc finger occupies 29-51 (CDSCGQVLYRAELERNLEVCPKC).

Belongs to the AccD/PCCB family. Acetyl-CoA carboxylase is a heterohexamer composed of biotin carboxyl carrier protein (AccB), biotin carboxylase (AccC) and two subunits each of ACCase subunit alpha (AccA) and ACCase subunit beta (AccD). It depends on Zn(2+) as a cofactor.

The protein localises to the cytoplasm. It catalyses the reaction N(6)-carboxybiotinyl-L-lysyl-[protein] + acetyl-CoA = N(6)-biotinyl-L-lysyl-[protein] + malonyl-CoA. It participates in lipid metabolism; malonyl-CoA biosynthesis; malonyl-CoA from acetyl-CoA: step 1/1. Component of the acetyl coenzyme A carboxylase (ACC) complex. Biotin carboxylase (BC) catalyzes the carboxylation of biotin on its carrier protein (BCCP) and then the CO(2) group is transferred by the transcarboxylase to acetyl-CoA to form malonyl-CoA. This is Acetyl-coenzyme A carboxylase carboxyl transferase subunit beta from Erwinia tasmaniensis (strain DSM 17950 / CFBP 7177 / CIP 109463 / NCPPB 4357 / Et1/99).